The following is a 558-amino-acid chain: MRCALALSALLLLLSTPPLLPSSPSPSPSPSQNATQTTTDSSNKTAPTPASSVTIMATDTAQQSTVPTSKANEILASVKATTLGVSSDSPGTTTLAQQVSGPVNTTVARGGGSGNPTTTIESPKSTKSADTTTVATSTATAKPNTTSSQNGAEDTTNSGGKSSHSVTTDLTSTKAEHLTTPHPTSPLSPRQPTSTHPVATPTSSGHDHLMKISSSSSTVAIPGYTFTSPGMTTTLLETVFHHVSQAGLELLTSGDLPTLASQSAGITASSVISQRTQQTSSQMPASSTAPSSQETVQPTSPATALRTPTLPETMSSSPTAASTTHRYPKTPSPTVAHESNWAKCEDLETQTQSEKQLVLNLTGNTLCAGGASDEKLISLICRAVKATFNPAQDKCGIRLASVPGSQTVVVKEITIHTKLPAKDVYERLKDKWDELKEAGVSDMKLGDQGPPEEAEDRFSMPLIITIVCMASFLLLVAALYGCCHQRLSQRKDQQRLTEELQTVENGYHDNPTLEVMETSSEMQEKKVVSLNGELGDSWIVPLDNLTKDDLDEEEDTHL.

The signal sequence occupies residues 1-22 (MRCALALSALLLLLSTPPLLPS). A compositionally biased stretch (pro residues) spans 20 to 29 (LPSSPSPSPS). Disordered stretches follow at residues 20-50 (LPSS…PTPA), 83-210 (LGVS…DHLM), and 270-338 (SVIS…VAHE). The Extracellular portion of the chain corresponds to 23-461 (SPSPSPSPSQ…EEAEDRFSMP (439 aa)). Polar residues-rich tracts occupy residues 32 to 50 (QNAT…PTPA) and 83 to 107 (LGVS…NTTV). N33, N43, and N104 each carry an N-linked (GlcNAc...) asparagine glycan. Positions 125–142 (STKSADTTTVATSTATAK) are enriched in low complexity. Polar residues-rich tracts occupy residues 143-173 (PNTT…LTST), 190-204 (RQPT…PTSS), and 270-302 (SVIS…TSPA). N144 is a glycosylation site (N-linked (GlcNAc...) asparagine). Positions 313–324 (TMSSSPTAASTT) are enriched in low complexity. An N-linked (GlcNAc...) asparagine glycan is attached at N360. Residues 462-482 (LIITIVCMASFLLLVAALYGC) form a helical membrane-spanning segment. Topologically, residues 483–558 (CHQRLSQRKD…DLDEEEDTHL (76 aa)) are cytoplasmic. T518 carries the phosphothreonine modification. Phosphoserine is present on residues S529 and S537. T556 is subject to Phosphothreonine.

Belongs to the podocalyxin family. In terms of assembly, monomer; when associated with the membrane raft. Oligomer; when integrated in the apical membrane. Interacts (via the C-terminal PDZ-binding motif DTHL) with NHERF1 (via the PDZ domains); the interaction is not detected in glomerular epithelium cells, take place early in the secretory pathway and is necessary for its apical membrane sorting. Found in a complex with EZR, PODXL and NHERF2. Associates with the actin cytoskeleton through complex formation with EZR and NHERF2. Interacts (via the C-terminal PDZ-binding motif DTHL) with NHERF2 (via the PDZ 1 domain); interaction is detected in glomerular epithelium cells. Interacts with EZR. In terms of processing, N- and O-linked glycosylated. Sialoglycoprotein. As to expression, glomerular epithelium cell (podocyte).

It localises to the apical cell membrane. It is found in the cell projection. The protein resides in the lamellipodium. The protein localises to the filopodium. Its subcellular location is the ruffle. It localises to the microvillus. It is found in the membrane raft. The protein resides in the membrane. Its function is as follows. Involved in the regulation of both adhesion and cell morphology and cancer progression. Functions as an anti-adhesive molecule that maintains an open filtration pathway between neighboring foot processes in the podocyte by charge repulsion. Acts as a pro-adhesive molecule, enhancing the adherence of cells to immobilized ligands, increasing the rate of migration and cell-cell contacts in an integrin-dependent manner. Induces the formation of apical actin-dependent microvilli. Involved in the formation of a preapical plasma membrane subdomain to set up initial epithelial polarization and the apical lumen formation during renal tubulogenesis. Plays a role in cancer development and aggressiveness by inducing cell migration and invasion through its interaction with the actin-binding protein EZR. Affects EZR-dependent signaling events, leading to increased activities of the MAPK and PI3K pathways in cancer cells. The sequence is that of Podocalyxin (PODXL) from Homo sapiens (Human).